Reading from the N-terminus, the 373-residue chain is Putative glutamate--cysteine ligase 2-1 (373 aa).

This sequence belongs to the glutamate--cysteine ligase type 2 family. YbdK subfamily.

The enzyme catalyses L-cysteine + L-glutamate + ATP = gamma-L-glutamyl-L-cysteine + ADP + phosphate + H(+). In terms of biological role, ATP-dependent carboxylate-amine ligase which exhibits weak glutamate--cysteine ligase activity. The sequence is that of Putative glutamate--cysteine ligase 2-1 from Legionella pneumophila (strain Paris).